Here is a 298-residue protein sequence, read N- to C-terminus: uncharacterized protein (298 aa).

The protein belongs to the NAD(P)-dependent epimerase/dehydratase family.

This is an uncharacterized protein from Saccharomyces cerevisiae (strain ATCC 204508 / S288c) (Baker's yeast).